Consider the following 559-residue polypeptide: Tissue-type plasminogen activator (559 aa).

Positions 1-17 (MKRELLCVLLLCGLAFP) are cleaved as a signal peptide. Residues 18-29 (LPDQGIHGRFRR) constitute a propeptide that is removed on maturation. Positions 30-32 (GAR) are cleaved as a propeptide — removed by plasmin. The 43-residue stretch at 36–78 (ATCRDEPTQTTYQQHQSWLRPMLRSSRVEYCRCNSGLVQCHSV) folds into the Fibronectin type-I domain. Cystine bridges form between Cys-38–Cys-68, Cys-66–Cys-75, Cys-83–Cys-94, Cys-88–Cys-105, Cys-107–Cys-116, Cys-124–Cys-205, Cys-145–Cys-187, Cys-176–Cys-200, Cys-213–Cys-294, Cys-234–Cys-276, Cys-265–Cys-289, Cys-297–Cys-428, Cys-340–Cys-356, Cys-348–Cys-417, Cys-442–Cys-516, Cys-474–Cys-490, and Cys-506–Cys-534. Positions 39 to 49 (RDEPTQTTYQQ) are important for binding to annexin A2. The EGF-like domain maps to 79-117 (PVRSCSEPRCFNGGTCQQALYFSDFVCQCPDGFVGKRCD). 2 Kringle domains span residues 124–205 (CFEE…TPAC) and 213–294 (CYVG…MSPC). Asn-149 carries an N-linked (GlcNAc...) asparagine glycan. Residues 309–558 (IKGGLYTDIT…YLDWIHDNMK (250 aa)) form the Peptidase S1 domain. Active-site charge relay system residues include His-355 and Asp-404. N-linked (GlcNAc...) asparagine glycosylation is present at Asn-481. Catalysis depends on Ser-510, which acts as the Charge relay system.

This sequence belongs to the peptidase S1 family. Heterodimer of chain A and chain B held by a disulfide bond. Binds to fibrin with high affinity. This interaction leads to an increase in the catalytic efficiency of the enzyme due to an increase in affinity for plasminogen. Similarly, binding to heparin increases the activation of plasminogen. Binds to annexin A2, cytokeratin-8, fibronectin and laminin. Binds to mannose receptor and the low-density lipoprotein receptor-related protein (LRP1); these proteins are involved in TPA clearance. Binds LRP1B; binding is followed by internalization and degradation. Forms heterodimer with SERPINA5. Interacts with SERPINE1. In complex with SERPINE1, interacts with SORL1. The single chain, almost fully active enzyme, can be further processed into a two-chain fully active form by a cleavage after Arg-308 catalyzed by plasmin, tissue kallikrein or factor Xa.

The protein resides in the secreted. It localises to the extracellular space. The enzyme catalyses Specific cleavage of Arg-|-Val bond in plasminogen to form plasmin.. Its activity is regulated as follows. Inhibited by SERPINA5. Inhibited by SERPINE1. Functionally, converts the abundant, but inactive, zymogen plasminogen to plasmin by hydrolyzing a single Arg-Val bond in plasminogen. By controlling plasmin-mediated proteolysis, it plays an important role in tissue remodeling and degradation, in cell migration and many other physiopathological events. During oocyte activation, plays a role in cortical granule reaction in the zona reaction, which contributes to the block to polyspermy. The chain is Tissue-type plasminogen activator (Plat) from Mus musculus (Mouse).